The following is a 452-amino-acid chain: MDRRIFGLENEYGVTCVFRGQRRLSPDEVARYLFRRVVSWGRSSNVFLKNGARLYLDVGSHPEYATPECDSVPDLVTHDKAGERILEGLLVEAERRLREEGIAGDIHLFKNNTDSAGNSYGCHENYLVGRHGEFSKLADVLVPFLVSRQILCGAGKVLQTPRGAVYCISQRAEHIWESVSSATTRSRPIINTRDEPHADAERFRRLHVIVGDSNMSETTMLLKLGSTDLVLRMIEAGVMLRDMTLENPIRAIREVSHDMTCQRKIKLANGREVSALDIQREYYSKAVEFVERRGGDEVAKRVLDLWGRTLLAIETDDLELVAREIDWVTKYVLIERFRHKHGLSLASPRVAELDLKYHDIHRDRGLYYRMERAGLVERVTRDLDVFEAKSRPPQTTRARLRGEFIKRAQEKRRDFTVDWVHLKLNDQAQRTVLCKDPFRSVDDRVDKLIASM.

A Mg(2+)-binding site is contributed by glutamate 9. An ATP-binding site is contributed by arginine 53. A Mg(2+)-binding site is contributed by tyrosine 55. The active-site Proton acceptor is the aspartate 57. Glutamate 63 lines the Mg(2+) pocket. Positions 66 and 419 each coordinate ATP.

The protein belongs to the Pup ligase/Pup deamidase family. Pup-conjugating enzyme subfamily.

It carries out the reaction ATP + [prokaryotic ubiquitin-like protein]-L-glutamate + [protein]-L-lysine = ADP + phosphate + N(6)-([prokaryotic ubiquitin-like protein]-gamma-L-glutamyl)-[protein]-L-lysine.. It functions in the pathway protein degradation; proteasomal Pup-dependent pathway. It participates in protein modification; protein pupylation. Functionally, catalyzes the covalent attachment of the prokaryotic ubiquitin-like protein modifier Pup to the proteasomal substrate proteins, thereby targeting them for proteasomal degradation. This tagging system is termed pupylation. The ligation reaction involves the side-chain carboxylate of the C-terminal glutamate of Pup and the side-chain amino group of a substrate lysine. This chain is Pup--protein ligase, found in Frankia alni (strain DSM 45986 / CECT 9034 / ACN14a).